A 146-amino-acid polypeptide reads, in one-letter code: Large ribosomal subunit protein uL15 (146 aa).

The segment covering 1 to 13 has biased composition (basic and acidic residues); the sequence is MKLHELKPSEGSR. The interval 1 to 54 is disordered; that stretch reads MKLHELKPSEGSRKVRNRVGRGIGSGNGKTAGKGHKGQNARSGGGVRPGFEGGQ. Composition is skewed to gly residues over residues 21–31 and 42–52; these read RGIGSGNGKTA and SGGGVRPGFEG.

The protein belongs to the universal ribosomal protein uL15 family. As to quaternary structure, part of the 50S ribosomal subunit.

Functionally, binds to the 23S rRNA. This is Large ribosomal subunit protein uL15 from Bacillus velezensis (strain DSM 23117 / BGSC 10A6 / LMG 26770 / FZB42) (Bacillus amyloliquefaciens subsp. plantarum).